The primary structure comprises 644 residues: DNA mismatch repair protein MutL (644 aa).

The disordered stretch occupies residues glycine 363–serine 405. Over residues serine 389–serine 405 the composition is skewed to low complexity.

Belongs to the DNA mismatch repair MutL/HexB family.

This protein is involved in the repair of mismatches in DNA. It is required for dam-dependent methyl-directed DNA mismatch repair. May act as a 'molecular matchmaker', a protein that promotes the formation of a stable complex between two or more DNA-binding proteins in an ATP-dependent manner without itself being part of a final effector complex. In Flavobacterium johnsoniae (strain ATCC 17061 / DSM 2064 / JCM 8514 / BCRC 14874 / CCUG 350202 / NBRC 14942 / NCIMB 11054 / UW101) (Cytophaga johnsonae), this protein is DNA mismatch repair protein MutL.